The primary structure comprises 877 residues: Dystroglycan 1 (877 aa).

An N-terminal signal peptide occupies residues 1–29 (MRMSAGLSLLIPLWGRTFLLLLSVAVTQS). The segment at 30–408 (RWPSEPSDAV…GHIRPTMTIP (379 aa)) is required for laminin recognition. Residues 49–71 (SMHSVLSDLHEAVPTVVGIPDGT) form an O-glycosylated at one site region. Residue N141 is glycosylated (N-linked (GlcNAc...) asparagine). C182 and C264 are disulfide-bonded. A mucin-like domain region spans residues 316–468 (ATPTPVTAIG…PPTRIRTTTS (153 aa)). O-linked (Man6P...) threonine glycans are attached at residues T317, T319, and T379. 2 disordered regions span residues 380–444 (PTLG…PVPR) and 458–480 (SPPTRIRTTTSGLPRGEPNQRPE). The span at 413-433 (PTAVATPPTPTTKNPRVSXPT) shows a compositional bias: low complexity. The segment at 446–468 (TTKAPITRLETASPPTRIRTTTS) is O-glycosylated at seven sites with GalNAc. The 110-residue stretch at 585–694 (RAPARFTAKF…MSIAVTGSGS (110 aa)) folds into the Peptidase S72 domain. N623, N631, and N643 each carry an N-linked (GlcNAc...) asparagine glycan. C651 and C695 are oxidised to a cystine. Residues 706 to 717 (PKRVPSEAPPTE) show a composition bias toward pro residues. The interval 706-727 (PKRVPSEAPPTEVPDRDPEKSS) is disordered. Residues 718–727 (VPDRDPEKSS) are compositionally biased toward basic and acidic residues. The chain crosses the membrane as a helical span at residues 732-757 (YLHTVIPAVVVAAILLIAGIIAMICY). Positions 758–764 (RKKRKGK) match the Nuclear localization signal motif. Position 772 is a phosphothreonine (T772). Positions 801–877 (LQEEKAPLPP…YRSPPPYVPP (77 aa)) are required for interaction with CAV3. The segment at 805–877 (KAPLPPPEYP…YRSPPPYVPP (73 aa)) is disordered. The segment covering 814 to 828 (PNQSVPETTPLNQDT) has biased composition (polar residues). The segment covering 841–852 (NAPPYQPPPPFT) has biased composition (pro residues). The interval 862–877 (PKNMTPYRSPPPYVPP) is required for binding DMD and UTRN. The PPXY motif motif lies at 871–874 (PPPY). At Y874 the chain carries Phosphotyrosine; by SRC.

As to quaternary structure, monomer. Heterodimer of alpha- and beta-dystroglycan subunits which are the central components of the dystrophin-glycoprotein complex. This complex then can form a dystrophin-associated glycoprotein complex (DGC) which is composed of three subcomplexes: a cytoplasmic complex comprised of DMD (or UTRN), DTNA and a number of syntrophins, such as SNTB1, SNTB2, SNTG1 and SNTG2, the transmembrane dystroglycan complex, and the sarcoglycan-sarcospan complex. Interacts (via the N-terminal of alphaDAG1) with LARGE1; the interaction enhances laminin binding. Interacts with SGCD. Interacts with AGR2 and AGR3. Interacts (betaDAG1) with DMD; the interaction is inhibited by phosphorylation on the PPXY motif. Interacts (betaDAG1, via its PPXY motif) with UTRN (via its WWW and ZZ domains); the interaction is inhibited by phosphorylation on the PPXY motif. Interacts (betaDAG1, via its phosphorylated PPXY motif) with the SH2 domain-containing proteins, FYN, CSK, NCK and SHC. Interacts (betaDAG1) with CAV3 (via a central WW-like domain); the interaction disrupts the binding of DMD. BetaDAG1 directly interacts with ANK3, but not with ANK2; this interaction does not interfere with DMD-binding and is required for retention at costameres. Identified in a dystroglycan complex that contains at least PRX, DRP2, UTRN, DMD and DAG1. Interacts with POMGNT1. BetaDAG1 interacts with CD93. O-glycosylated. POMGNT1 catalyzes the initial addition of N-acetylglucosamine, giving rise to the GlcNAc(beta1-2)Man(alpha1-)O-Ser/Thr moiety and thus providing the necessary basis for the addition of further carbohydrate moieties. Heavily O-glycosylated comprising of up to two thirds of its mass and the carbohydrate composition differs depending on tissue type. Mucin-type O-glycosylation is important for ligand binding activity. O-mannosylation of alpha-DAG1 is found in high abundance in both brain and muscle where the most abundant glycan is Sia-alpha-2-3-Gal-beta-1-4-Glc-NAc-beta-1-2-Man. In muscle, glycosylation on Thr-317, Thr-319 and Thr-379 by a phosphorylated O-mannosyl glycan with the structure 2-(N-acetylamido)-2-deoxygalactosyl-beta-1,3-2-(N-acetylamido)-2-deoxyglucosyl-beta-1,4-6-phosphomannose is mediated by like-acetylglucosaminyltransferase (LARGE1) protein amd is required for laminin binding. O-glycosylated in the N-terminal region with a core 1 or possibly core 8 glycan. The brain form displays a unique glycosylation pattern which is absent in other tissues; this form shows enhanced binding to laminin LAMA5 compared to the skeletal muscle form. Post-translationally, N-glycosylated. In terms of processing, autolytic cleavage produces the alpha and beta subunits. In cutaneous cells, as well as in certain pathological conditions, shedding of beta-dystroglycan can occur releasing a peptide of about 30 kDa. SRC-mediated phosphorylation of the PPXY motif of the beta subunit recruits SH2 domain-containing proteins, but inhibits binding to WWW domain-containing proteins, DMD and UTRN. This phosphorylation also inhibits nuclear entry.

It localises to the secreted. Its subcellular location is the extracellular space. The protein localises to the cell membrane. It is found in the cytoplasm. The protein resides in the cytoskeleton. It localises to the nucleus. Its subcellular location is the nucleoplasm. The protein localises to the sarcolemma. It is found in the postsynaptic cell membrane. Functionally, the dystroglycan complex is involved in a number of processes including laminin and basement membrane assembly, sarcolemmal stability, cell survival, peripheral nerve myelination, nodal structure, cell migration, and epithelial polarization. Its function is as follows. Extracellular peripheral glycoprotein that acts as a receptor for extracellular matrix proteins containing laminin-G domains. Receptor for laminin-2 (LAMA2) and agrin in peripheral nerve Schwann cells. Also acts as a receptor for laminin LAMA5. In terms of biological role, transmembrane protein that plays important roles in connecting the extracellular matrix to the cytoskeleton. Acts as a cell adhesion receptor in both muscle and non-muscle tissues. Receptor for both DMD and UTRN and, through these interactions, scaffolds axin to the cytoskeleton. Also functions in cell adhesion-mediated signaling and implicated in cell polarity. This Sus scrofa (Pig) protein is Dystroglycan 1.